Consider the following 380-residue polypeptide: Sterol 24-C-methyltransferase ERG6B (380 aa).

Belongs to the class I-like SAM-binding methyltransferase superfamily. Erg6/SMT family.

The catalysed reaction is lanosterol + S-adenosyl-L-methionine = eburicol + S-adenosyl-L-homocysteine + H(+). Its pathway is steroid metabolism; ergosterol biosynthesis. Sterol 24-C-methyltransferase; part of the third module of ergosterol biosynthesis pathway that includes the late steps of the pathway. ERG6A and ERG6B methylate lanosterol at C-24 to produce eburicol. The third module or late pathway involves the ergosterol synthesis itself through consecutive reactions that mainly occur in the endoplasmic reticulum (ER) membrane. Firstly, the squalene synthase ERG9 catalyzes the condensation of 2 farnesyl pyrophosphate moieties to form squalene, which is the precursor of all steroids. Squalene synthase is crucial for balancing the incorporation of farnesyl diphosphate (FPP) into sterol and nonsterol isoprene synthesis. Secondly, squalene is converted into lanosterol by the consecutive action of the squalene epoxidase ERG1 and the lanosterol synthase ERG7. Then, the delta(24)-sterol C-methyltransferase ERG6 methylates lanosterol at C-24 to produce eburicol. Eburicol is the substrate of the sterol 14-alpha demethylase encoded by CYP51A, CYP51B and CYP51C, to yield 4,4,24-trimethyl ergosta-8,14,24(28)-trienol. CYP51B encodes the enzyme primarily responsible for sterol 14-alpha-demethylation, and plays an essential role in ascospore formation. CYP51A encodes an additional sterol 14-alpha-demethylase, induced on ergosterol depletion and responsible for the intrinsic variation in azole sensitivity. The third CYP51 isoform, CYP51C, does not encode a sterol 14-alpha-demethylase, but is required for full virulence on host wheat ears. The C-14 reductase ERG24 then reduces the C14=C15 double bond which leads to 4,4-dimethylfecosterol. A sequence of further demethylations at C-4, involving the C-4 demethylation complex containing the C-4 methylsterol oxidases ERG25, the sterol-4-alpha-carboxylate 3-dehydrogenase ERG26 and the 3-keto-steroid reductase ERG27, leads to the production of fecosterol via 4-methylfecosterol. ERG28 has a role as a scaffold to help anchor ERG25, ERG26 and ERG27 to the endoplasmic reticulum. The C-8 sterol isomerase ERG2 then catalyzes the reaction which results in unsaturation at C-7 in the B ring of sterols and thus converts fecosterol to episterol. The sterol-C5-desaturases ERG3A and ERG3BB then catalyze the introduction of a C-5 double bond in the B ring to produce 5-dehydroepisterol. The C-22 sterol desaturases ERG5A and ERG5B further convert 5-dehydroepisterol into ergosta-5,7,22,24(28)-tetraen-3beta-ol by forming the C-22(23) double bond in the sterol side chain. Finally, ergosta-5,7,22,24(28)-tetraen-3beta-ol is substrate of the C-24(28) sterol reductase ERG4 to produce ergosterol. This Gibberella zeae (strain ATCC MYA-4620 / CBS 123657 / FGSC 9075 / NRRL 31084 / PH-1) (Wheat head blight fungus) protein is Sterol 24-C-methyltransferase ERG6B.